The chain runs to 1275 residues: Rho1 guanine nucleotide exchange factor 3 (1275 aa).

Disordered stretches follow at residues 1-42 (MKLS…SFQK), 56-113 (SPPF…NSAA), 131-188 (NNPL…SPYS), and 214-248 (LSPT…VEYL). Positions 7–17 (LFHRSSKDHGG) are enriched in basic and acidic residues. 3 stretches are compositionally biased toward polar residues: residues 32-42 (PHSSSPPSFQK), 80-113 (ASIN…NSAA), and 142-151 (SPGNKQNTVD). Low complexity-rich tracts occupy residues 178–188 (SSVSSHSSPYS) and 214–228 (LSPT…SPIR). Phosphoserine is present on serine 293. The 193-residue stretch at 465-657 (ARQNNIHELI…RATCEECDAV (193 aa)) folds into the DH domain. The PH domain occupies 692–855 (EFFFEGIVQR…WVEKINVAKK (164 aa)). The region spanning 930–1239 (YGDISCIAQF…KYYPSNSDWL (310 aa)) is the CNH domain.

Its subcellular location is the cytoplasm. In terms of biological role, stimulates the exchange of Rho1 GDP-bound form into GTP-bound form. Regulates, via interaction and activation of Rho1, beta-1,3-glucan biosynthesis and cell wall integrity during septation. Involved in the regulation of contractile ring assembly. In Schizosaccharomyces pombe (strain 972 / ATCC 24843) (Fission yeast), this protein is Rho1 guanine nucleotide exchange factor 3 (rgf3).